A 566-amino-acid chain; its full sequence is Urease subunit alpha 2 (566 aa).

The Urease domain occupies 128-566; sequence GGVDTHIHFI…LPMAQRYFLF (439 aa). Residues H133, H135, and K216 each contribute to the Ni(2+) site. K216 carries the N6-carboxylysine modification. H218 provides a ligand contact to substrate. Ni(2+)-binding residues include H245 and H271. H319 acts as the Proton donor in catalysis. D359 serves as a coordination point for Ni(2+).

It belongs to the metallo-dependent hydrolases superfamily. Urease alpha subunit family. May form a heterohexamer of 3 UreC (alpha) and 3 UreAB (gamma/beta) subunits. May also form a heterotrimer of UreA (gamma), UreB (beta) and UreC (alpha) subunits. Three heterotrimers associate to form the active enzyme. The cofactor is Ni cation. Post-translationally, carboxylation allows a single lysine to coordinate two nickel ions.

The protein resides in the cytoplasm. It catalyses the reaction urea + 2 H2O + H(+) = hydrogencarbonate + 2 NH4(+). Its pathway is nitrogen metabolism; urea degradation; CO(2) and NH(3) from urea (urease route): step 1/1. The sequence is that of Urease subunit alpha 2 from Pseudomonas syringae pv. syringae (strain B728a).